The sequence spans 728 residues: Propionyl-CoA carboxylase alpha chain, mitochondrial (728 aa).

The N-terminal 52 residues, 1 to 52 (MAGFWVGTAPLVAAGRRGRWPPQQLMLSAALRTLKHVLYYSRQCLMVSRNLG), are a transit peptide targeting the mitochondrion. Positions 62–509 (TFDKILVANR…STKFLSDVYP (448 aa)) constitute a Biotin carboxylation domain. Residue Lys65 is modified to N6-acetyllysine; alternate. N6-succinyllysine; alternate is present on Lys65. At Lys119 the chain carries N6-succinyllysine. Lys150 carries the N6-acetyllysine; alternate modification. Lys150 is subject to N6-succinyllysine; alternate. Position 177 (Lys177) interacts with ATP. The region spanning 181–378 (KLLAKKAEVN…LVQEMIRVAK (198 aa)) is the ATP-grasp domain. An N6-acetyllysine; alternate modification is found at Lys200. Lys200 carries the post-translational modification N6-succinyllysine; alternate. Residues 209–270 (AREI…PRHI), Glu261, and Asn296 each bind ATP. Residue Ser252 is modified to Phosphoserine. The residue at position 262 (Lys262) is an N6-succinyllysine. Lys328 carries the post-translational modification N6-acetyllysine; alternate. Lys328 is modified (N6-succinyllysine; alternate). Residues Glu336, Glu349, and Asn351 each coordinate Mg(2+). Glu336, Glu349, and Asn351 together coordinate Mn(2+). Glu349 is an active-site residue. An N6-succinyllysine mark is found at Lys385 and Lys407. Position 409 (Phe409) interacts with biotin. Position 496 is an N6-acetyllysine (Lys496). Lys502, Lys513, and Lys648 each carry N6-succinyllysine. The Biotinyl-binding domain occupies 653 to 728 (KVTEDTSSVL…GEGDLLVELE (76 aa)). Lys694 is modified (N6-biotinyllysine; by HLCS).

The holoenzyme is a dodecamer composed of 6 PCCA/alpha subunits and 6 PCCB/beta subunits. Interacts (via the biotin carboxylation domain) with SIRT4. Interacts with SIRT3 and SIRT5. Mg(2+) serves as cofactor. It depends on Mn(2+) as a cofactor. The cofactor is biotin. In terms of processing, acetylated. The biotin cofactor is covalently attached to the C-terminal biotinyl-binding domain and is required for the catalytic activity. Biotinylation is catalyzed by HLCS.

Its subcellular location is the mitochondrion matrix. It carries out the reaction propanoyl-CoA + hydrogencarbonate + ATP = (S)-methylmalonyl-CoA + ADP + phosphate + H(+). The catalysed reaction is butanoyl-CoA + hydrogencarbonate + ATP = (2S)-ethylmalonyl-CoA + ADP + phosphate + H(+). Its pathway is metabolic intermediate metabolism; propanoyl-CoA degradation; succinyl-CoA from propanoyl-CoA: step 1/3. Functionally, this is one of the 2 subunits of the biotin-dependent propionyl-CoA carboxylase (PCC), a mitochondrial enzyme involved in the catabolism of odd chain fatty acids, branched-chain amino acids isoleucine, threonine, methionine, and valine and other metabolites. Propionyl-CoA carboxylase catalyzes the carboxylation of propionyl-CoA/propanoyl-CoA to D-methylmalonyl-CoA/(S)-methylmalonyl-CoA. Within the holoenzyme, the alpha subunit catalyzes the ATP-dependent carboxylation of the biotin carried by the biotin carboxyl carrier (BCC) domain, while the beta subunit then transfers the carboxyl group from carboxylated biotin to propionyl-CoA. Propionyl-CoA carboxylase also significantly acts on butyryl-CoA/butanoyl-CoA, which is converted to ethylmalonyl-CoA/(2S)-ethylmalonyl-CoA at a much lower rate. Other alternative minor substrates include (2E)-butenoyl-CoA/crotonoyl-CoA. This chain is Propionyl-CoA carboxylase alpha chain, mitochondrial, found in Homo sapiens (Human).